The sequence spans 454 residues: Enolase (454 aa).

Position 167 (Q167) interacts with (2R)-2-phosphoglycerate. E209 serves as the catalytic Proton donor. D250, E312, and D339 together coordinate Mg(2+). (2R)-2-phosphoglycerate-binding residues include K364, R393, S394, and K415. K364 functions as the Proton acceptor in the catalytic mechanism.

Belongs to the enolase family. Mg(2+) is required as a cofactor.

It is found in the cytoplasm. The protein localises to the secreted. It localises to the cell surface. The enzyme catalyses (2R)-2-phosphoglycerate = phosphoenolpyruvate + H2O. It participates in carbohydrate degradation; glycolysis; pyruvate from D-glyceraldehyde 3-phosphate: step 4/5. Catalyzes the reversible conversion of 2-phosphoglycerate (2-PG) into phosphoenolpyruvate (PEP). It is essential for the degradation of carbohydrates via glycolysis. This Mycoplasmopsis agalactiae (strain NCTC 10123 / CIP 59.7 / PG2) (Mycoplasma agalactiae) protein is Enolase.